The sequence spans 175 residues: Disulfide bond formation protein B (175 aa).

The Cytoplasmic segment spans residues 1-13 (MTAFTRFAHSRAS). A helical transmembrane segment spans residues 14–30 (WFILTGSAIALEAAALY). At 31-48 (FQYVMKLDPCVMCIYQRL) the chain is on the periplasmic side. Cys-40 and Cys-43 are joined by a disulfide. Residues 49–64 (AVFGILASGLIGMTAP) form a helical membrane-spanning segment. Over 65-71 (KFLIVRI) the chain is Cytoplasmic. Residues 72–89 (LGAIGWAVSATWGLKLAL) traverse the membrane as a helical segment. At 90–144 (ALVDMQNNPSPFSTCSFLPEFPAWMPLHEWFPSVMLPTGMCTDVPWQFMGVTMAE) the chain is on the periplasmic side. Cys-104 and Cys-130 are joined by a disulfide. A helical transmembrane segment spans residues 145 to 163 (WMVVAFSGYLVALLLFIVP). The Cytoplasmic portion of the chain corresponds to 164–175 (ILSGSNKPSLYK).

The protein belongs to the DsbB family.

The protein localises to the cell inner membrane. Its function is as follows. Required for disulfide bond formation in some periplasmic proteins. Acts by oxidizing the DsbA protein. The protein is Disulfide bond formation protein B of Shewanella sp. (strain ANA-3).